Reading from the N-terminus, the 120-residue chain is Meiosis expressed gene 1 protein homolog (120 aa).

The disordered stretch occupies residues 1–45; it reads MDGLAIGGVSAPMTAERPQQVKKQLSRRTPDAADGRKPTRMERAK. Positions 28 to 45 are enriched in basic and acidic residues; that stretch reads RTPDAADGRKPTRMERAK.

Belongs to the MEIG1 family.

This chain is Meiosis expressed gene 1 protein homolog, found in Oxyrrhis marina (Dinoflagellate).